A 180-amino-acid chain; its full sequence is Large ribosomal subunit protein uL5 (180 aa).

This sequence belongs to the universal ribosomal protein uL5 family. In terms of assembly, part of the 50S ribosomal subunit; part of the 5S rRNA/L5/L18/L25 subcomplex. Contacts the 5S rRNA and the P site tRNA. Forms a bridge to the 30S subunit in the 70S ribosome.

Its function is as follows. This is one of the proteins that bind and probably mediate the attachment of the 5S RNA into the large ribosomal subunit, where it forms part of the central protuberance. In the 70S ribosome it contacts protein S13 of the 30S subunit (bridge B1b), connecting the 2 subunits; this bridge is implicated in subunit movement. Contacts the P site tRNA; the 5S rRNA and some of its associated proteins might help stabilize positioning of ribosome-bound tRNAs. The chain is Large ribosomal subunit protein uL5 from Gloeothece citriformis (strain PCC 7424) (Cyanothece sp. (strain PCC 7424)).